We begin with the raw amino-acid sequence, 152 residues long: Deoxyuridine 5'-triphosphate nucleotidohydrolase (152 aa).

Substrate is bound by residues 71-73, N84, 88-90, and M98; these read RSG and LID.

The protein belongs to the dUTPase family. The cofactor is Mg(2+).

The catalysed reaction is dUTP + H2O = dUMP + diphosphate + H(+). It participates in pyrimidine metabolism; dUMP biosynthesis; dUMP from dCTP (dUTP route): step 2/2. This enzyme is involved in nucleotide metabolism: it produces dUMP, the immediate precursor of thymidine nucleotides and it decreases the intracellular concentration of dUTP so that uracil cannot be incorporated into DNA. In Shigella flexneri, this protein is Deoxyuridine 5'-triphosphate nucleotidohydrolase.